A 195-amino-acid chain; its full sequence is ATP-dependent Clp protease proteolytic subunit 2 (195 aa).

S95 acts as the Nucleophile in catalysis. H120 is a catalytic residue.

The protein belongs to the peptidase S14 family. In terms of assembly, fourteen ClpP subunits assemble into 2 heptameric rings which stack back to back to give a disk-like structure with a central cavity, resembling the structure of eukaryotic proteasomes.

The protein resides in the cytoplasm. The catalysed reaction is Hydrolysis of proteins to small peptides in the presence of ATP and magnesium. alpha-casein is the usual test substrate. In the absence of ATP, only oligopeptides shorter than five residues are hydrolyzed (such as succinyl-Leu-Tyr-|-NHMec, and Leu-Tyr-Leu-|-Tyr-Trp, in which cleavage of the -Tyr-|-Leu- and -Tyr-|-Trp bonds also occurs).. Its function is as follows. Cleaves peptides in various proteins in a process that requires ATP hydrolysis. Has a chymotrypsin-like activity. Plays a major role in the degradation of misfolded proteins. This Methylococcus capsulatus (strain ATCC 33009 / NCIMB 11132 / Bath) protein is ATP-dependent Clp protease proteolytic subunit 2.